The sequence spans 91 residues: MTRSAKKGPFCDAHLLKKVEVATSGKDKKPIKTWSRRSTILPEFIGLTIAVHNGRQHVPVYVTENMVGHKLGEFAITRTFKGHAADKKAKR.

Belongs to the universal ribosomal protein uS19 family.

Functionally, protein S19 forms a complex with S13 that binds strongly to the 16S ribosomal RNA. The chain is Small ribosomal subunit protein uS19 from Cupriavidus taiwanensis (strain DSM 17343 / BCRC 17206 / CCUG 44338 / CIP 107171 / LMG 19424 / R1) (Ralstonia taiwanensis (strain LMG 19424)).